Reading from the N-terminus, the 633-residue chain is Polypeptide N-acetylgalactosaminyltransferase 3 (633 aa).

Residues 1 to 19 (MAHLKRLVKLHIKRHYHRK) are Cytoplasmic-facing. A helical; Signal-anchor for type II membrane protein transmembrane segment spans residues 20–37 (FWKLGAVIFFFLVVLILM). The Lumenal portion of the chain corresponds to 38–633 (QREVSVQYSK…LQKWIFSQND (596 aa)). The disordered stretch occupies residues 112-145 (DRPPQDSNAPGASGKPFKITHLSPEEQKEKERGE). Residues 134-145 (SPEEQKEKERGE) are compositionally biased toward basic and acidic residues. The interval 184–293 (LPTTSVIIVF…YGWLEPLLAR (110 aa)) is catalytic subdomain A. Mn(2+)-binding residues include Asp277 and His279. A glycan (N-linked (GlcNAc...) asparagine) is linked at Asn297. Positions 356–418 (PIKTPTFAGG…PCSVVGHVFR (63 aa)) are catalytic subdomain B. Mn(2+) is bound at residue His415. N-linked (GlcNAc...) asparagine glycosylation is present at Asn484. Residues 504–630 (VISGYIKSVG…TDLLQKWIFS (127 aa)) enclose the Ricin B-type lectin domain. Cys517 and Cys535 form a disulfide bridge. Positions 519, 522, 536, and 541 each coordinate UDP-N-acetyl-alpha-D-galactosamine. 2 disulfides stabilise this stretch: Cys561/Cys574 and Cys605/Cys618.

It belongs to the glycosyltransferase 2 family. GalNAc-T subfamily. Requires Mn(2+) as cofactor. Highly expressed in the reproductive tract, principally in the testis and uterus, and to a lesser degree in the cervix with only trace levels in the ovary. Also expressed at high level in sublingual gland, stomach and colon, with more moderate amounts present in the submandibular and parotid gland as well as the kidney.

The protein resides in the golgi apparatus. Its subcellular location is the golgi stack membrane. It carries out the reaction L-seryl-[protein] + UDP-N-acetyl-alpha-D-galactosamine = a 3-O-[N-acetyl-alpha-D-galactosaminyl]-L-seryl-[protein] + UDP + H(+). The catalysed reaction is L-threonyl-[protein] + UDP-N-acetyl-alpha-D-galactosamine = a 3-O-[N-acetyl-alpha-D-galactosaminyl]-L-threonyl-[protein] + UDP + H(+). Its pathway is protein modification; protein glycosylation. Catalyzes the initial reaction in O-linked oligosaccharide biosynthesis, the transfer of an N-acetyl-D-galactosamine residue to a serine or threonine residue on the protein receptor. Has activity toward HIV envelope glycoprotein gp120. Has activity towards EA2, MUC2 and MUC5. Probably glycosylates fibronectin in vivo. Glycosylates FGF23. In Mus musculus (Mouse), this protein is Polypeptide N-acetylgalactosaminyltransferase 3 (Galnt3).